The following is a 157-amino-acid chain: 2-C-methyl-D-erythritol 2,4-cyclodiphosphate synthase (157 aa).

A divalent metal cation is bound by residues Asp8 and His10. 4-CDP-2-C-methyl-D-erythritol 2-phosphate-binding positions include 8–10 (DVH) and 34–35 (HS). Residue His42 coordinates a divalent metal cation. 4-CDP-2-C-methyl-D-erythritol 2-phosphate-binding positions include 56–58 (DIG), 132–135 (TTNE), and Arg142.

This sequence belongs to the IspF family. Homotrimer. A divalent metal cation serves as cofactor.

The enzyme catalyses 4-CDP-2-C-methyl-D-erythritol 2-phosphate = 2-C-methyl-D-erythritol 2,4-cyclic diphosphate + CMP. The protein operates within isoprenoid biosynthesis; isopentenyl diphosphate biosynthesis via DXP pathway; isopentenyl diphosphate from 1-deoxy-D-xylulose 5-phosphate: step 4/6. Functionally, involved in the biosynthesis of isopentenyl diphosphate (IPP) and dimethylallyl diphosphate (DMAPP), two major building blocks of isoprenoid compounds. Catalyzes the conversion of 4-diphosphocytidyl-2-C-methyl-D-erythritol 2-phosphate (CDP-ME2P) to 2-C-methyl-D-erythritol 2,4-cyclodiphosphate (ME-CPP) with a corresponding release of cytidine 5-monophosphate (CMP). In Chlorobaculum parvum (strain DSM 263 / NCIMB 8327) (Chlorobium vibrioforme subsp. thiosulfatophilum), this protein is 2-C-methyl-D-erythritol 2,4-cyclodiphosphate synthase.